The chain runs to 311 residues: Glycerol-3-phosphate dehydrogenase [NAD(P)+] (311 aa).

Residues W12, R31, R32, and K96 each contribute to the NADPH site. Sn-glycerol 3-phosphate is bound by residues K96, G124, and S126. A128 contributes to the NADPH binding site. Sn-glycerol 3-phosphate is bound by residues K178, D231, S241, R242, and N243. Catalysis depends on K178, which acts as the Proton acceptor. An NADPH-binding site is contributed by R242. Residues V266 and E268 each coordinate NADPH.

It belongs to the NAD-dependent glycerol-3-phosphate dehydrogenase family.

It is found in the cytoplasm. It carries out the reaction sn-glycerol 3-phosphate + NAD(+) = dihydroxyacetone phosphate + NADH + H(+). The catalysed reaction is sn-glycerol 3-phosphate + NADP(+) = dihydroxyacetone phosphate + NADPH + H(+). Its pathway is membrane lipid metabolism; glycerophospholipid metabolism. In terms of biological role, catalyzes the reduction of the glycolytic intermediate dihydroxyacetone phosphate (DHAP) to sn-glycerol 3-phosphate (G3P), the key precursor for phospholipid synthesis. This Helicobacter hepaticus (strain ATCC 51449 / 3B1) protein is Glycerol-3-phosphate dehydrogenase [NAD(P)+].